A 244-amino-acid chain; its full sequence is tRNA (guanine-N(1)-)-methyltransferase (244 aa).

Residues Gly-113 and 133–138 contribute to the S-adenosyl-L-methionine site; that span reads IGDYVL.

It belongs to the RNA methyltransferase TrmD family. In terms of assembly, homodimer.

The protein resides in the cytoplasm. It carries out the reaction guanosine(37) in tRNA + S-adenosyl-L-methionine = N(1)-methylguanosine(37) in tRNA + S-adenosyl-L-homocysteine + H(+). Functionally, specifically methylates guanosine-37 in various tRNAs. The sequence is that of tRNA (guanine-N(1)-)-methyltransferase from Bacillus cereus (strain G9842).